The primary structure comprises 556 residues: 2-succinyl-5-enolpyruvyl-6-hydroxy-3-cyclohexene-1-carboxylate synthase (556 aa).

It belongs to the TPP enzyme family. MenD subfamily. In terms of assembly, homodimer. It depends on Mg(2+) as a cofactor. The cofactor is Mn(2+). Requires thiamine diphosphate as cofactor.

The catalysed reaction is isochorismate + 2-oxoglutarate + H(+) = 5-enolpyruvoyl-6-hydroxy-2-succinyl-cyclohex-3-ene-1-carboxylate + CO2. The protein operates within quinol/quinone metabolism; 1,4-dihydroxy-2-naphthoate biosynthesis; 1,4-dihydroxy-2-naphthoate from chorismate: step 2/7. It participates in quinol/quinone metabolism; menaquinone biosynthesis. Its function is as follows. Catalyzes the thiamine diphosphate-dependent decarboxylation of 2-oxoglutarate and the subsequent addition of the resulting succinic semialdehyde-thiamine pyrophosphate anion to isochorismate to yield 2-succinyl-5-enolpyruvyl-6-hydroxy-3-cyclohexene-1-carboxylate (SEPHCHC). The polypeptide is 2-succinyl-5-enolpyruvyl-6-hydroxy-3-cyclohexene-1-carboxylate synthase (Salmonella agona (strain SL483)).